The sequence spans 364 residues: tRNA 2-selenouridine synthase (364 aa).

Residues 14-137 (LLADTPLIDV…LRQTAIQATW (124 aa)) enclose the Rhodanese domain. The active-site S-selanylcysteine intermediate is the Cys-97.

This sequence belongs to the SelU family. Monomer.

It carries out the reaction 5-methylaminomethyl-2-thiouridine(34) in tRNA + selenophosphate + (2E)-geranyl diphosphate + H2O + H(+) = 5-methylaminomethyl-2-selenouridine(34) in tRNA + (2E)-thiogeraniol + phosphate + diphosphate. The enzyme catalyses 5-methylaminomethyl-2-thiouridine(34) in tRNA + (2E)-geranyl diphosphate = 5-methylaminomethyl-S-(2E)-geranyl-thiouridine(34) in tRNA + diphosphate. It catalyses the reaction 5-methylaminomethyl-S-(2E)-geranyl-thiouridine(34) in tRNA + selenophosphate + H(+) = 5-methylaminomethyl-2-(Se-phospho)selenouridine(34) in tRNA + (2E)-thiogeraniol. The catalysed reaction is 5-methylaminomethyl-2-(Se-phospho)selenouridine(34) in tRNA + H2O = 5-methylaminomethyl-2-selenouridine(34) in tRNA + phosphate. In terms of biological role, involved in the post-transcriptional modification of the uridine at the wobble position (U34) of tRNA(Lys), tRNA(Glu) and tRNA(Gln). Catalyzes the conversion of 2-thiouridine (S2U-RNA) to 2-selenouridine (Se2U-RNA). Acts in a two-step process involving geranylation of 2-thiouridine (S2U) to S-geranyl-2-thiouridine (geS2U) and subsequent selenation of the latter derivative to 2-selenouridine (Se2U) in the tRNA chain. The sequence is that of tRNA 2-selenouridine synthase from Salmonella paratyphi A (strain ATCC 9150 / SARB42).